The following is a 421-amino-acid chain: Gamma-glutamyl phosphate reductase (421 aa).

Belongs to the gamma-glutamyl phosphate reductase family.

It localises to the cytoplasm. It carries out the reaction L-glutamate 5-semialdehyde + phosphate + NADP(+) = L-glutamyl 5-phosphate + NADPH + H(+). The protein operates within amino-acid biosynthesis; L-proline biosynthesis; L-glutamate 5-semialdehyde from L-glutamate: step 2/2. Functionally, catalyzes the NADPH-dependent reduction of L-glutamate 5-phosphate into L-glutamate 5-semialdehyde and phosphate. The product spontaneously undergoes cyclization to form 1-pyrroline-5-carboxylate. In Herminiimonas arsenicoxydans, this protein is Gamma-glutamyl phosphate reductase.